Consider the following 268-residue polypeptide: Small ribosomal subunit protein uS3 (268 aa).

Positions 38–106 constitute a KH type-2 domain; sequence IRKLLATGME…QVQLNILEVK (69 aa). The tract at residues 217 to 268 is disordered; sequence NTAAPAGDRPRRERPSRPRRSGATGTTATSTEAGRAATATADAPATEQNQEG. Low complexity predominate over residues 237 to 268; that stretch reads SGATGTTATSTEAGRAATATADAPATEQNQEG.

This sequence belongs to the universal ribosomal protein uS3 family. Part of the 30S ribosomal subunit. Forms a tight complex with proteins S10 and S14.

Its function is as follows. Binds the lower part of the 30S subunit head. Binds mRNA in the 70S ribosome, positioning it for translation. The sequence is that of Small ribosomal subunit protein uS3 from Rhodococcus erythropolis (strain PR4 / NBRC 100887).